The primary structure comprises 660 residues: MLLSNQPANTKPQQTPSPSQTQNFKSKLQQQIVSAAAAAAANIANGSSHHHHHQNHHHHHPLNNHHNHNHNQHNISFATDFSIAAIMARGGNAPSSREPSERSLSPASVERYSGQDADDDVDVDVVDCSDSEMPSATAAAAAAATTAAAAAAALQAQQQARQALRVAQQQQQQQQQQRQQTHHHATTGKQQRQHHNHHSSNTNNSSNSGNSNTNSKSSSQRGRSAAAVGAAATPSPPPPPPSQSPEELERLSPEESPAQQPTPKIVGSCNCDDLTPVQCHLETKELWDKFHELGTEMIITKSGRRMFPTVRVSFSGPLRQIQPADRYAVLLDVVPLDSRRYRYAYHRSSWLVAGKADPPPPSRIYAHPDCPLSPEALRKQVVSFEKVKLTNNEMDKSGQVVLNSMHRYQPRIHLVRLSHGQSIPGSPKELQDMDHKTFVFPETVFTAVTAYQNQLITKLKIDSNPFAKGFRDSSRLSDFDRDPMDAFFFDQHMRTAPLRFFPDPLMSQLTPQEADAASMALLEKARQHLQMFGRSPYTEMLLPHLYQRSAAPPPPPPAPHLSAFQLGMWQQQWPQLTAGFLASANQQAALALAAAGANRTPPPSMAVAPPAPATPTSSCGSASPDLRARPQLNHYPQRFSPYQVPQHQASPPASNRAESP.

The segment covering 1 to 11 (MLLSNQPANTK) has biased composition (polar residues). Disordered stretches follow at residues 1–72 (MLLS…NHNQ), 90–122 (GGNAPSSREPSERSLSPASVERYSGQDADDDVD), and 169–266 (QQQQ…PKIV). Low complexity predominate over residues 12–22 (PQQTPSPSQTQ). The segment covering 23 to 33 (NFKSKLQQQIV) has biased composition (polar residues). Residues 35–47 (AAAAAAANIANGS) are compositionally biased toward low complexity. Residues 48–71 (SHHHHHQNHHHHHPLNNHHNHNHN) show a composition bias toward basic residues. Composition is skewed to low complexity over residues 93-108 (APSSREPSERSLSPAS) and 169-179 (QQQQQQQQQRQ). The segment covering 180-198 (QTHHHATTGKQQRQHHNHH) has biased composition (basic residues). Residues 199 to 233 (SSNTNNSSNSGNSNTNSKSSSQRGRSAAAVGAAAT) are compositionally biased toward low complexity. Positions 234–243 (PSPPPPPPSQ) are enriched in pro residues. Residues 286–472 (LWDKFHELGT…SNPFAKGFRD (187 aa)) constitute a DNA-binding region (T-box). Positions 598–660 (NRTPPPSMAV…PPASNRAESP (63 aa)) are disordered. Pro residues predominate over residues 600-613 (TPPPSMAVAPPAPA). Residues 614–624 (TPTSSCGSASP) are compositionally biased toward low complexity. The segment covering 643 to 660 (QVPQHQASPPASNRAESP) has biased composition (polar residues).

It localises to the nucleus. This chain is T-box protein H15 (H15), found in Drosophila melanogaster (Fruit fly).